Consider the following 283-residue polypeptide: Co-chaperone protein DjlA (283 aa).

Residues 1-6 (MQIFGK) are Periplasmic-facing. Residues 7–30 (ILGGFFGFLFGGFFGAALGIFIGH) traverse the membrane as a helical segment. Residues 31–283 (QFDKAKRMAN…DLIKKEKGIK (253 aa)) are Cytoplasmic-facing. A compositionally biased stretch (gly residues) spans 188–197 (QGGGFSGHQS). The segment at 188-210 (QGGGFSGHQSGGSHQQGQWQQAS) is disordered. Residues 198–210 (GGSHQQGQWQQAS) show a composition bias toward low complexity. The region spanning 217 to 283 (DAYNLLGISE…DLIKKEKGIK (67 aa)) is the J domain.

As to quaternary structure, homodimer.

The protein resides in the cell inner membrane. Functionally, regulatory DnaK co-chaperone. Direct interaction between DnaK and DjlA is needed for the induction of the wcaABCDE operon, involved in the synthesis of a colanic acid polysaccharide capsule, possibly through activation of the RcsB/RcsC phosphotransfer signaling pathway. The colanic acid capsule may help the bacterium survive conditions outside the host. In Aliivibrio fischeri (strain ATCC 700601 / ES114) (Vibrio fischeri), this protein is Co-chaperone protein DjlA.